A 430-amino-acid chain; its full sequence is Trigger factor (430 aa).

Positions 165-250 (TDIAIFDFEG…LHQIKTKKIP (86 aa)) constitute a PPIase FKBP-type domain.

The protein belongs to the FKBP-type PPIase family. Tig subfamily.

It localises to the cytoplasm. It catalyses the reaction [protein]-peptidylproline (omega=180) = [protein]-peptidylproline (omega=0). In terms of biological role, involved in protein export. Acts as a chaperone by maintaining the newly synthesized protein in an open conformation. Functions as a peptidyl-prolyl cis-trans isomerase. The polypeptide is Trigger factor (Onion yellows phytoplasma (strain OY-M)).